The sequence spans 841 residues: MTQVTVKELAKVVDTPVERLLQQMREAGLPHTAAEQVVTDNEKQALLTHLKSGHKAKVEEPRKITLQRKTTSTLRVAGSKSISVEVRKKKVFVQRSPEEIEAERKREMDERRAVENAARQKAEEEAKRRAEEDARNQPAAGQPASAPAQPVAAAEPVREAPAAAAPAPASAAPSADARKRDEQRRPDKPRADDRNARGGDGDRKNAPHRASVKEKAPAPRVAPRTTDEESDSFRRGGRGKGKLKKRNAHGFQSPTGPVIRDVAIGETITVGELSAQMSVKAAEVIKFMFKMGTPVTINQVLDQETAQLIAEELGHKVTLVSDNALEDSLAESLKFEGESFSRAPVVTVMGHVDHGKTSLLDYIRRAKVAAGEAGGITQHIGAYHVETERGMVTFLDTPGHAAFTAMRARGAKATDIVILVVAADDGVMPQTIEAVQHAVAAGVPLVVAVNKIDKPGADLDRIRSELSVHGVTSEEWGGDTPFVSVSAKMGTGVDELLEAVLLQAEVLELKATPSAPGRGVVVESRLDKGRGPVATVLVQDGTLRQGDMVLVGSNFGRIRAMLDENGKPVKEAGPSIPVEILGLDGTPDAGDEMSVLSDEKKAREVALFRQGKFREVKLARAHAGKLENIFENMGQAEKKTLNIVLKSDVRGSLEALNGALNGLGNDEVQVRVVGGGVGGITESDANLALASNAVLFGFNVRADAGARKIVEQEGLDMRYYNVIYDIIEDVKKALTGMLGSDVRENILGIAEVRDVFRSPKFGAIAGCMVLEGTVYRNRPIRVLREDIVIFEGELESLRRFKDDAADVRAGMECGIGVKSYNDVKVGDKIEVFEKVQVARSL.

The interval 94 to 255 (QRSPEEIEAE…RNAHGFQSPT (162 aa)) is disordered. Residues 96–135 (SPEEIEAERKREMDERRAVENAARQKAEEEAKRRAEEDAR) show a composition bias toward basic and acidic residues. The span at 136-175 (NQPAAGQPASAPAQPVAAAEPVREAPAAAAPAPASAAPSA) shows a compositional bias: low complexity. Basic and acidic residues-rich tracts occupy residues 176 to 217 (DARK…EKAP) and 225 to 234 (TTDEESDSFR). A compositionally biased stretch (basic residues) spans 235 to 248 (RGGRGKGKLKKRNA). The region spanning 341-510 (SRAPVVTVMG…LLQAEVLELK (170 aa)) is the tr-type G domain. The tract at residues 350–357 (GHVDHGKT) is G1. 350–357 (GHVDHGKT) serves as a coordination point for GTP. Residues 375 to 379 (GITQH) are G2. The segment at 396–399 (DTPG) is G3. GTP contacts are provided by residues 396-400 (DTPGH) and 450-453 (NKID). The interval 450-453 (NKID) is G4. The interval 486–488 (SAK) is G5.

Belongs to the TRAFAC class translation factor GTPase superfamily. Classic translation factor GTPase family. IF-2 subfamily.

The protein resides in the cytoplasm. In terms of biological role, one of the essential components for the initiation of protein synthesis. Protects formylmethionyl-tRNA from spontaneous hydrolysis and promotes its binding to the 30S ribosomal subunits. Also involved in the hydrolysis of GTP during the formation of the 70S ribosomal complex. The protein is Translation initiation factor IF-2 of Pseudomonas syringae pv. tomato (strain ATCC BAA-871 / DC3000).